A 205-amino-acid polypeptide reads, in one-letter code: Heme ligase (205 aa).

One can recognise an FAS1 domain in the interval 48-203 (KRTIINLIYS…GVVHIVDKPI (156 aa)). The required for binding to host hemoglobin stretch occupies residues 154 to 172 (LRNLLNNDLIVKIEGEFKH). Heme binding domain stretches follow at residues 171 to 181 (KHCNHSIYLNG) and 191 to 200 (CHNGVVHIVD).

As to quaternary structure, component of the hemozoin formation complex (HFC) composed of falcipains FP2A and/or FP2B, plasmepsins PMII, PMIII/HAP and PMIV, heme detoxifying protein HDP and falcilysin FLN. The HFC complex is involved in hemoglobin degradation and detoxification of heme in the food vacuole during the asexual blood stage. Interacts with falcipain 2; the interaction is direct and enhances HDP catalytic activity. Interacts with host hemoglobin.

The protein localises to the vacuole. It is found in the host cytoplasm. It localises to the host cytosol. It catalyses the reaction 2 Fe(III)-heme b = beta-hematin. Its function is as follows. Heme detoxifying enzyme that converts heme to crystalline hemozoin (beta-hematin) to protect the organism from the toxic effects of heme. During its development, P.falciparum proteolyzes vast amounts of host hemoglobin, leading to heme release. This chain is Heme ligase, found in Plasmodium falciparum (isolate 3D7).